A 45-amino-acid chain; its full sequence is uncharacterized protein (45 aa).

This is an uncharacterized protein from Lolium latent virus (isolate Lolium/USA/US1/-) (LoLV).